We begin with the raw amino-acid sequence, 273 residues long: Soluble P-type ATPase-like phosphatase (273 aa).

The active-site 4-aspartylphosphate intermediate is the Asp8.

It belongs to the cation transport ATPase (P-type) (TC 3.A.3) family. Type IB subfamily. Mg(2+) serves as cofactor.

With respect to regulation, inhibited by orthovanadate. Its function is as follows. Most probably acts as a phosphatase in the cytosol. The protein is Soluble P-type ATPase-like phosphatase (patS) of Methanocaldococcus jannaschii (strain ATCC 43067 / DSM 2661 / JAL-1 / JCM 10045 / NBRC 100440) (Methanococcus jannaschii).